A 203-amino-acid chain; its full sequence is Dual-action ribosomal maturation protein DarP (203 aa).

2 disordered regions span residues 1–31 (MRPM…SKSQ) and 183–203 (GASD…DDEA). The segment covering 186-203 (DSDDEAAGDAGDDHDDEA) has biased composition (acidic residues).

The protein belongs to the DarP family.

Its subcellular location is the cytoplasm. In terms of biological role, member of a network of 50S ribosomal subunit biogenesis factors which assembles along the 30S-50S interface, preventing incorrect 23S rRNA structures from forming. Promotes peptidyl transferase center (PTC) maturation. This is Dual-action ribosomal maturation protein DarP from Burkholderia cenocepacia (strain ATCC BAA-245 / DSM 16553 / LMG 16656 / NCTC 13227 / J2315 / CF5610) (Burkholderia cepacia (strain J2315)).